We begin with the raw amino-acid sequence, 424 residues long: Enolase (424 aa).

Gln-163 contacts (2R)-2-phosphoglycerate. Catalysis depends on Glu-205, which acts as the Proton donor. Mg(2+) is bound by residues Asp-242, Glu-285, and Asp-312. Residues Lys-337, Arg-366, Ser-367, and Lys-388 each contribute to the (2R)-2-phosphoglycerate site. Lys-337 functions as the Proton acceptor in the catalytic mechanism.

This sequence belongs to the enolase family. Mg(2+) is required as a cofactor.

The protein localises to the cytoplasm. It localises to the secreted. Its subcellular location is the cell surface. It catalyses the reaction (2R)-2-phosphoglycerate = phosphoenolpyruvate + H2O. It participates in carbohydrate degradation; glycolysis; pyruvate from D-glyceraldehyde 3-phosphate: step 4/5. In terms of biological role, catalyzes the reversible conversion of 2-phosphoglycerate (2-PG) into phosphoenolpyruvate (PEP). It is essential for the degradation of carbohydrates via glycolysis. In Sphingopyxis alaskensis (strain DSM 13593 / LMG 18877 / RB2256) (Sphingomonas alaskensis), this protein is Enolase.